The primary structure comprises 127 residues: Glycine cleavage system H protein 1 (127 aa).

The 82-residue stretch at 20-101 (LLTVGITAYA…LGEAWFFRFR (82 aa)) folds into the Lipoyl-binding domain. Lys-60 carries the N6-lipoyllysine modification.

This sequence belongs to the GcvH family. The glycine cleavage system is composed of four proteins: P, T, L and H. The cofactor is (R)-lipoate.

The glycine cleavage system catalyzes the degradation of glycine. The H protein shuttles the methylamine group of glycine from the P protein to the T protein. The protein is Glycine cleavage system H protein 1 of Pseudomonas aeruginosa (strain ATCC 15692 / DSM 22644 / CIP 104116 / JCM 14847 / LMG 12228 / 1C / PRS 101 / PAO1).